We begin with the raw amino-acid sequence, 406 residues long: Glutamyl-tRNA reductase (406 aa).

Substrate contacts are provided by residues 49-52 (TCHR), S107, 112-114 (EPQ), and Q118. C50 functions as the Nucleophile in the catalytic mechanism. 187–192 (GAGETG) contacts NADP(+).

Belongs to the glutamyl-tRNA reductase family. In terms of assembly, homodimer.

The catalysed reaction is (S)-4-amino-5-oxopentanoate + tRNA(Glu) + NADP(+) = L-glutamyl-tRNA(Glu) + NADPH + H(+). It participates in porphyrin-containing compound metabolism; protoporphyrin-IX biosynthesis; 5-aminolevulinate from L-glutamyl-tRNA(Glu): step 1/2. Its function is as follows. Catalyzes the NADPH-dependent reduction of glutamyl-tRNA(Glu) to glutamate 1-semialdehyde (GSA). This is Glutamyl-tRNA reductase from Thermomicrobium roseum (strain ATCC 27502 / DSM 5159 / P-2).